The sequence spans 310 residues: AA9 family lytic polysaccharide monooxygenase A (310 aa).

An N-terminal signal peptide occupies residues 1-21 (MPSTKVAALSAVLALASTVAG). The Cu(2+) site is built by His22 and His107. 2 cysteine pairs are disulfide-bonded: Cys77/Cys199 and Cys118/Cys122. N-linked (GlcNAc...) asparagine glycosylation is found at Asn121 and Asn159. An O2-binding site is contributed by His185. Position 196 (Tyr196) interacts with Cu(2+).

This sequence belongs to the polysaccharide monooxygenase AA9 family. Cu(2+) serves as cofactor.

The protein resides in the secreted. The catalysed reaction is [(1-&gt;4)-beta-D-glucosyl]n+m + reduced acceptor + O2 = 4-dehydro-beta-D-glucosyl-[(1-&gt;4)-beta-D-glucosyl]n-1 + [(1-&gt;4)-beta-D-glucosyl]m + acceptor + H2O.. Its function is as follows. Lytic polysaccharide monooxygenase (LPMO) that depolymerizes crystalline and amorphous polysaccharides via the oxidation of scissile alpha- or beta-(1-4)-glycosidic bonds, yielding C1, C4 as well as C6 oxidation products. Catalysis by LPMOs requires the reduction of the active-site copper from Cu(II) to Cu(I) by a reducing agent and H(2)O(2) or O(2) as a cosubstrate. Active on cellulose, but not on xylan, starch, or chitin. The sequence is that of AA9 family lytic polysaccharide monooxygenase A from Talaromyces pinophilus (Penicillium pinophilum).